The sequence spans 262 residues: Mitochondrial calcium uniporter regulator 1 (262 aa).

Residues 138–175 (EKSEFSALRTQNEKVKIELQQLKKQLNDSIVKVRASNK) are a coiled coil. Residues 239–261 (TIKYLAGSVFTCLTIALGFYRLW) traverse the membrane as a helical segment.

The protein belongs to the CCDC90 family.

The protein localises to the mitochondrion inner membrane. Key regulator of mitochondrial calcium uniporter (mcu) required for calcium entry into mitochondrion. This is Mitochondrial calcium uniporter regulator 1 from Xenopus tropicalis (Western clawed frog).